The sequence spans 265 residues: Energy-coupling factor transporter transmembrane protein EcfT (265 aa).

The next 6 membrane-spanning stretches (helical) occupy residues 29–49 (VMAFIAIVFLANNWLTYALMF), 63–83 (FLFFIKGLQPIFWLILITLLL), 94–114 (LVDLGLLQITTLGLANGAMMF), 117–137 (FVLIIFMTTLLTLTTSPIELT), 143–163 (ILAPFRLVHLPVHELALMLSI), and 243–263 (RFADTCLLISLAVLSGLLFWL).

The protein belongs to the energy-coupling factor EcfT family. Forms a stable energy-coupling factor (ECF) transporter complex composed of 2 membrane-embedded substrate-binding proteins (S component), 2 ATP-binding proteins (A component) and 2 transmembrane proteins (T component). May be able to interact with more than 1 S component at a time.

Its subcellular location is the cell membrane. In terms of biological role, transmembrane (T) component of an energy-coupling factor (ECF) ABC-transporter complex. Unlike classic ABC transporters this ECF transporter provides the energy necessary to transport a number of different substrates. The polypeptide is Energy-coupling factor transporter transmembrane protein EcfT (Listeria innocua serovar 6a (strain ATCC BAA-680 / CLIP 11262)).